The primary structure comprises 252 residues: MSGHSKWATTKHKKAVIDARRAKSFAKLIKNIEVAAKIGGADLSGNPTLVDAVQKAKKTSVPNDNIDRAIKRGAGLTGESIDYTTIMYEGYGPGGVALLIECLTENKNRAAAEVRTAMTRNGGTMADPGSVAYNFHRKGVIVVPHADGVDEDAVLVAVLEAGAEEVTDLGESFEVLTEATDLVAARTALQAAGIDYDSADAEFVATVTVQTDAEAARKVFRLIDALEDSDDVQNVYTTLDLSAEVQAQLDDE.

The protein belongs to the TACO1 family.

Its subcellular location is the cytoplasm. This Leifsonia xyli subsp. xyli (strain CTCB07) protein is Probable transcriptional regulatory protein Lxx10750.